Here is a 317-residue protein sequence, read N- to C-terminus: Protein-methionine-sulfoxide reductase catalytic subunit MsrP (317 aa).

The segment at residues 1–40 (MKKLTSNDVTPEEIFYQRRKIIKAFGLSAVATALPTFSFA) is a signal peptide (tat-type signal). Mo-molybdopterin is bound by residues Asn71, 74 to 75 (YE), Cys129, Thr164, Asn216, Arg221, and 232 to 234 (SIK).

Belongs to the MsrP family. Heterodimer of a catalytic subunit (MsrP) and a heme-binding subunit (MsrQ). Requires Mo-molybdopterin as cofactor. Predicted to be exported by the Tat system. The position of the signal peptide cleavage has not been experimentally proven.

It localises to the periplasm. It catalyses the reaction L-methionyl-[protein] + a quinone + H2O = L-methionyl-(S)-S-oxide-[protein] + a quinol. It carries out the reaction L-methionyl-[protein] + a quinone + H2O = L-methionyl-(R)-S-oxide-[protein] + a quinol. Its function is as follows. Part of the MsrPQ system that repairs oxidized periplasmic proteins containing methionine sulfoxide residues (Met-O), using respiratory chain electrons. Thus protects these proteins from oxidative-stress damage caused by reactive species of oxygen and chlorine generated by the host defense mechanisms. MsrPQ is essential for the maintenance of envelope integrity under bleach stress, rescuing a wide series of structurally unrelated periplasmic proteins from methionine oxidation. The catalytic subunit MsrP is non-stereospecific, being able to reduce both (R-) and (S-) diastereoisomers of methionine sulfoxide. This chain is Protein-methionine-sulfoxide reductase catalytic subunit MsrP, found in Histophilus somni (strain 2336) (Haemophilus somnus).